Reading from the N-terminus, the 272-residue chain is ATP phosphoribosyltransferase regulatory subunit (272 aa).

Belongs to the class-II aminoacyl-tRNA synthetase family. HisZ subfamily. Heteromultimer composed of HisG and HisZ subunits.

Its subcellular location is the cytoplasm. Its pathway is amino-acid biosynthesis; L-histidine biosynthesis; L-histidine from 5-phospho-alpha-D-ribose 1-diphosphate: step 1/9. Required for the first step of histidine biosynthesis. May allow the feedback regulation of ATP phosphoribosyltransferase activity by histidine. This is ATP phosphoribosyltransferase regulatory subunit from Staphylococcus aureus (strain Mu3 / ATCC 700698).